Here is an 885-residue protein sequence, read N- to C-terminus: Alanine--tRNA ligase (885 aa).

Positions 574, 578, 685, and 689 each coordinate Zn(2+).

Belongs to the class-II aminoacyl-tRNA synthetase family. Requires Zn(2+) as cofactor.

The protein localises to the cytoplasm. It carries out the reaction tRNA(Ala) + L-alanine + ATP = L-alanyl-tRNA(Ala) + AMP + diphosphate. Functionally, catalyzes the attachment of alanine to tRNA(Ala) in a two-step reaction: alanine is first activated by ATP to form Ala-AMP and then transferred to the acceptor end of tRNA(Ala). Also edits incorrectly charged Ser-tRNA(Ala) and Gly-tRNA(Ala) via its editing domain. This Deinococcus geothermalis (strain DSM 11300 / CIP 105573 / AG-3a) protein is Alanine--tRNA ligase.